Consider the following 152-residue polypeptide: 3-hydroxyacyl-[acyl-carrier-protein] dehydratase FabZ (152 aa).

Histidine 58 is an active-site residue.

This sequence belongs to the thioester dehydratase family. FabZ subfamily.

The protein resides in the cytoplasm. It carries out the reaction a (3R)-hydroxyacyl-[ACP] = a (2E)-enoyl-[ACP] + H2O. Functionally, involved in unsaturated fatty acids biosynthesis. Catalyzes the dehydration of short chain beta-hydroxyacyl-ACPs and long chain saturated and unsaturated beta-hydroxyacyl-ACPs. This Prochlorococcus marinus (strain MIT 9215) protein is 3-hydroxyacyl-[acyl-carrier-protein] dehydratase FabZ.